The chain runs to 309 residues: Porphobilinogen deaminase (309 aa).

An S-(dipyrrolylmethanemethyl)cysteine modification is found at Cys-244.

The protein belongs to the HMBS family. In terms of assembly, monomer. The cofactor is dipyrromethane.

The enzyme catalyses 4 porphobilinogen + H2O = hydroxymethylbilane + 4 NH4(+). It functions in the pathway porphyrin-containing compound metabolism; protoporphyrin-IX biosynthesis; coproporphyrinogen-III from 5-aminolevulinate: step 2/4. Its function is as follows. Tetrapolymerization of the monopyrrole PBG into the hydroxymethylbilane pre-uroporphyrinogen in several discrete steps. The protein is Porphobilinogen deaminase of Agrobacterium fabrum (strain C58 / ATCC 33970) (Agrobacterium tumefaciens (strain C58)).